A 388-amino-acid polypeptide reads, in one-letter code: Processive diacylglycerol beta-glucosyltransferase (388 aa).

Belongs to the glycosyltransferase 28 family. UgtP subfamily.

The protein localises to the cell membrane. The enzyme catalyses a 1,2-diacyl-3-O-(beta-D-glucopyranosyl)-sn-glycerol + UDP-alpha-D-glucose = a 1,2-diacyl-3-O-(beta-D-Glc-(1-&gt;6)-beta-D-Glc)-sn-glycerol + UDP + H(+). It catalyses the reaction a 1,2-diacyl-3-O-(beta-D-Glc-(1-&gt;6)-beta-D-Glc)-sn-glycerol + UDP-alpha-D-glucose = a 1,2-diacyl-3-O-(beta-D-Glc-(1-&gt;6)-beta-D-Glc-(1-&gt;6)-beta-D-Glc)-sn-glycerol + UDP + H(+). The catalysed reaction is a 1,2-diacyl-sn-glycerol + UDP-alpha-D-glucose = a 1,2-diacyl-3-O-(beta-D-glucopyranosyl)-sn-glycerol + UDP + H(+). It functions in the pathway glycolipid metabolism; diglucosyl-diacylglycerol biosynthesis. In terms of biological role, processive glucosyltransferase involved in the biosynthesis of both the bilayer- and non-bilayer-forming membrane glucolipids. Is able to successively transfer up to three glucosyl residues to diacylglycerol (DAG), thereby catalyzing the formation of beta-monoglucosyl-DAG (3-O-(beta-D-glucopyranosyl)-1,2-diacyl-sn-glycerol), beta-diglucosyl-DAG (3-O-(beta-D-glucopyranosyl-beta-(1-&gt;6)-D-glucopyranosyl)-1,2-diacyl-sn-glycerol) and beta-triglucosyl-DAG (3-O-(beta-D-glucopyranosyl-beta-(1-&gt;6)-D-glucopyranosyl-beta-(1-&gt;6)-D-glucopyranosyl)-1,2-diacyl-sn-glycerol). Beta-diglucosyl-DAG is the predominant glycolipid found in Bacillales and is also used as a membrane anchor for lipoteichoic acid (LTA). The chain is Processive diacylglycerol beta-glucosyltransferase from Bacillus anthracis (strain A0248).